Reading from the N-terminus, the 353-residue chain is MTATLERRESASIWGRFCNWVTSTENRLYIGWFGVLMIPTLLTATSVFIIAFIAAPPVDIDGIREPVSGSLLYGNNIISGAIIPTSAAIGLHFYPIWEAASVDEWLYNGGPYEIIVLHFLLGVACYMGREWELSYRLGMRPWIAVAYSAPVAAATAVFLIYPIGQGSFSDGMPLGISGTFNFMIVFQAEHNILMHPFHMLGVAGVFGGSLFSAMHGSLVTSSLIRETTENESANAGYKFGQEEETYNIVAAHGYFGRLIFQYASFNNSRSLHFFLAAWPVVGIWFTALGISTMAFNLNGFNFNQSVVDSQGRVINTWADIINRANLGMEVMHERNAHNFPLDLAAVEAPAVNG.

Thr-2 carries the post-translational modification N-acetylthreonine. Thr-2 carries the post-translational modification Phosphothreonine. The next 3 membrane-spanning stretches (helical) occupy residues 29 to 46 (YIGWFGVLMIPTLLTATS), 118 to 133 (HFLLGVACYMGREWEL), and 142 to 156 (WIAVAYSAPVAAATA). His-118 is a chlorophyll a binding site. Tyr-126 contacts pheophytin a. Asp-170 and Glu-189 together coordinate [CaMn4O5] cluster. Residues 197–218 (FHMLGVAGVFGGSLFSAMHGSL) traverse the membrane as a helical segment. His-198 contributes to the chlorophyll a binding site. A quinone contacts are provided by residues His-215 and 264-265 (SF). Fe cation is bound at residue His-215. Residue His-272 coordinates Fe cation. The chain crosses the membrane as a helical span at residues 274-288 (FLAAWPVVGIWFTAL). 4 residues coordinate [CaMn4O5] cluster: His-332, Glu-333, Asp-342, and Ala-344. A propeptide spanning residues 345 to 353 (AVEAPAVNG) is cleaved from the precursor.

The protein belongs to the reaction center PufL/M/PsbA/D family. In terms of assembly, PSII is composed of 1 copy each of membrane proteins PsbA, PsbB, PsbC, PsbD, PsbE, PsbF, PsbH, PsbI, PsbJ, PsbK, PsbL, PsbM, PsbT, PsbX, PsbY, PsbZ, Psb30/Ycf12, at least 3 peripheral proteins of the oxygen-evolving complex and a large number of cofactors. It forms dimeric complexes. The cofactor is The D1/D2 heterodimer binds P680, chlorophylls that are the primary electron donor of PSII, and subsequent electron acceptors. It shares a non-heme iron and each subunit binds pheophytin, quinone, additional chlorophylls, carotenoids and lipids. D1 provides most of the ligands for the Mn4-Ca-O5 cluster of the oxygen-evolving complex (OEC). There is also a Cl(-1) ion associated with D1 and D2, which is required for oxygen evolution. The PSII complex binds additional chlorophylls, carotenoids and specific lipids.. Post-translationally, tyr-161 forms a radical intermediate that is referred to as redox-active TyrZ, YZ or Y-Z. In terms of processing, C-terminally processed by CTPA; processing is essential to allow assembly of the oxygen-evolving complex and thus photosynthetic growth.

The protein resides in the plastid. Its subcellular location is the chloroplast thylakoid membrane. The enzyme catalyses 2 a plastoquinone + 4 hnu + 2 H2O = 2 a plastoquinol + O2. In terms of biological role, photosystem II (PSII) is a light-driven water:plastoquinone oxidoreductase that uses light energy to abstract electrons from H(2)O, generating O(2) and a proton gradient subsequently used for ATP formation. It consists of a core antenna complex that captures photons, and an electron transfer chain that converts photonic excitation into a charge separation. The D1/D2 (PsbA/PsbD) reaction center heterodimer binds P680, the primary electron donor of PSII as well as several subsequent electron acceptors. The protein is Photosystem II protein D1 of Conocephalum conicum (Snakeskin liverwort).